The primary structure comprises 611 residues: Zinc metalloproteinase-disintegrin-like ohanin (611 aa).

The signal sequence occupies residues 1-20; it reads MIQVLLVTICLVVFPYQGSS. The propeptide occupies 21–187; sequence IILESGKVND…WESDEPIEKI (167 aa). A Peptidase M12B domain is found at 198–393; that stretch reads KYLELYIVAD…DTPQCLINKP (196 aa). N217 and N260 each carry an N-linked (GlcNAc...) asparagine glycan. 3 disulfide bridges follow: C307-C388, C347-C372, and C349-C354. Residue H332 coordinates Zn(2+). Residue E333 is part of the active site. The Zn(2+) site is built by H336 and H342. N395 carries N-linked (GlcNAc...) asparagine glycosylation. Residues 401–487 form the Disintegrin domain; that stretch reads NAVCGNYVEE…ECPMDRFHKN (87 aa). Intrachain disulfides connect C404–C433, C415–C428, C417–C423, C427–C450, C441–C447, C446–C472, C459–C479, C466–C498, C491–C503, C510–C560, C525–C578, C538–C548, C555–C603, and C597–C608. The short motif at 465–467 is the D/ECD-tripeptide element; it reads ECD. N-linked (GlcNAc...) asparagine glycosylation is present at N528.

It belongs to the venom metalloproteinase (M12B) family. P-III subfamily. P-IIIa sub-subfamily. Monomer. Zn(2+) serves as cofactor. In terms of tissue distribution, expressed by the venom gland.

It localises to the secreted. Inhibited by EDTA, but not by PMSF. Its function is as follows. Snake venom zinc metalloproteinase that has hemorrhagic activity. Inhibits ADP-, TMVA- and stejnulxin-induced platelet aggregation in a dose-dependent manner (on washed platelet, but not on platelet rich plasm). Also specifically degrades alpha-chain of fibrinogen (FGA). The sequence is that of Zinc metalloproteinase-disintegrin-like ohanin from Ophiophagus hannah (King cobra).